We begin with the raw amino-acid sequence, 163 residues long: COP9 signalosome complex subunit 9 (163 aa).

In terms of domain architecture, PCI spans 5 to 120; the sequence is EVLHAVLDPK…SVGRRIKVLR (116 aa).

As to quaternary structure, component of a COP9 signalosome-like (CSN) complex.

The protein localises to the cytoplasm. The protein resides in the nucleus. Component of the COP9 signalosome (CSN) complex that acts as a regulator of the ubiquitin (Ubl) conjugation pathway by mediating the deneddylation of the cullin subunit of SCF-type E3 ubiquitin-protein ligase complexes. The complex is involved in the regulation of the mating pheromone response. In Eremothecium gossypii (strain ATCC 10895 / CBS 109.51 / FGSC 9923 / NRRL Y-1056) (Yeast), this protein is COP9 signalosome complex subunit 9 (CSN9).